We begin with the raw amino-acid sequence, 167 residues long: Ribosome maturation factor RimM (167 aa).

A PRC barrel domain is found at 94–165; it reads ENEFYYSDII…KIIITPMEGL (72 aa).

This sequence belongs to the RimM family. In terms of assembly, binds ribosomal protein uS19.

It localises to the cytoplasm. An accessory protein needed during the final step in the assembly of 30S ribosomal subunit, possibly for assembly of the head region. Essential for efficient processing of 16S rRNA. May be needed both before and after RbfA during the maturation of 16S rRNA. It has affinity for free ribosomal 30S subunits but not for 70S ribosomes. The chain is Ribosome maturation factor RimM from Staphylococcus aureus (strain MRSA252).